The following is a 253-amino-acid chain: Eukaryotic initiation factor 4A-6 (253 aa).

One can recognise a Helicase ATP-binding domain in the interval 1 to 82 (HVVVGTPGRV…RKFMNKPVRI (82 aa)). Residues 30-33 (DEAD) carry the DEAD box motif. The Helicase C-terminal domain maps to 93–253 (GIKQFYVNVD…EELPANVADL (161 aa)).

This sequence belongs to the DEAD box helicase family. eIF4A subfamily. EIF4F is a multi-subunit complex, the composition of which varies with external and internal environmental conditions. It is composed of at least EIF4A, EIF4E and EIF4G.

It catalyses the reaction ATP + H2O = ADP + phosphate + H(+). In terms of biological role, ATP-dependent RNA helicase which is a subunit of the eIF4F complex involved in cap recognition and is required for mRNA binding to ribosome. In the current model of translation initiation, eIF4A unwinds RNA secondary structures in the 5'-UTR of mRNAs which is necessary to allow efficient binding of the small ribosomal subunit, and subsequent scanning for the initiator codon. In Nicotiana tabacum (Common tobacco), this protein is Eukaryotic initiation factor 4A-6.